The following is a 392-amino-acid chain: MASISVDQIRKAQRANGPATVLAIGTANPPTSFYQADYPDFYFRVTKNQHMTELKDKFKRICEKTTIKKRHLYLTEDRLNQHPNLLEYMAPSLNTRQDMLVVEIPKLGKEAAMKAIKEWGQPKSRITHLIFCSTNGVDMPGADYECAKLLGLSSSVKRVMLYQQGCHAGGSVLRIAKDLAENNKGARILTINSEITIGIFHSPDETYFDGMVGQALFGDGASATIVGADPDKEIGERPVFEMVSAAQEFIPNSDGAVDGHLTEAGLVYHIHKDVPGLISKNIEKSLVEALNPIGISDWNSLFWIVHPGGPAILNAVEAKLHLKKEKMADTRHVLSEYGNMSSVSIFFIMDKLRKRSLEEGKSTTGDGFEWGVLFGFGPGLTVETIVLHSLAN.

The active site involves C166.

The protein belongs to the thiolase-like superfamily. Chalcone/stilbene synthases family. As to expression, expressed at the same level in leaves and in glandular trichomes.

The protein resides in the cytoplasm. Chalcone synthase that may use malonyl-CoA and hexanoyl-CoA as substrates but without producing olivetol or olivetolic acid. The chain is Chalcone synthase-like protein 1 (CAN383) from Cannabis sativa (Hemp).